The primary structure comprises 68 residues: Pleurocidin (68 aa).

The signal sequence occupies residues 1 to 22 (MKFTATFLMIAIFVLMVEPGEC). The propeptide occupies 48–68 (GDKQELNKRAVDEDPNVIVFE).

Belongs to the pleurocidin family. In terms of tissue distribution, goblet cells.

It localises to the secreted. Its function is as follows. Antimicrobial peptide with potent activity against Gram-positive and Gram-negative bacteria. Activity against E.coli and B.subtilis. Weaker activity against L.mucor, s.marcescens and P.aeruginosa. May play a role in innate host defense. In Pseudopleuronectes americanus (Winter flounder), this protein is Pleurocidin (ple2).